A 167-amino-acid chain; its full sequence is NAD(P)H-quinone oxidoreductase subunit I, chloroplastic (167 aa).

4Fe-4S ferredoxin-type domains follow at residues 55–84 (GRIHFEFDKCIACEVCVRVCPIDLPVVDWK) and 95–124 (LNYSIDFGICIFCGNCVEYCPTNCLSMTEE). [4Fe-4S] cluster-binding residues include C64, C67, C70, C74, C104, C107, C110, and C114.

This sequence belongs to the complex I 23 kDa subunit family. As to quaternary structure, NDH is composed of at least 16 different subunits, 5 of which are encoded in the nucleus. [4Fe-4S] cluster is required as a cofactor.

It is found in the plastid. Its subcellular location is the chloroplast thylakoid membrane. It catalyses the reaction a plastoquinone + NADH + (n+1) H(+)(in) = a plastoquinol + NAD(+) + n H(+)(out). The catalysed reaction is a plastoquinone + NADPH + (n+1) H(+)(in) = a plastoquinol + NADP(+) + n H(+)(out). Its function is as follows. NDH shuttles electrons from NAD(P)H:plastoquinone, via FMN and iron-sulfur (Fe-S) centers, to quinones in the photosynthetic chain and possibly in a chloroplast respiratory chain. The immediate electron acceptor for the enzyme in this species is believed to be plastoquinone. Couples the redox reaction to proton translocation, and thus conserves the redox energy in a proton gradient. This is NAD(P)H-quinone oxidoreductase subunit I, chloroplastic from Atropa belladonna (Belladonna).